Reading from the N-terminus, the 261-residue chain is MTYNPRIGGFTHVKQASFDVHVKRGEAQPRTSFAQQIKRIFSKIGETLGQLFRHRAPDSAPGRVRLQGVRYVGSYRPTGDAKQAIRHFVDEAVKQVAHTRTPEIRQDAEFGRQVYEATLCAIFSEAKDRFCMDPATRAGNVRPAFIEALGDAARATGLPGADKQGVFTPSGAGTNPLYTEIRLRADTLMGAELAARPEYRELQPYARQQAIDLVANALPAERSNTLVEFRQTVQTLEATYRRAAQDASRDEKGATNAADGA.

This sequence belongs to the GEF (guanine exchange factor) SopE family. As to quaternary structure, monomer. Interacts with human CDC42.

It localises to the secreted. Activator for both CDC42 and RAC1 by directly interacting with these Rho GTPases and acting as a guanine nucleotide exchange factor (GEF). This activation results in actin cytoskeleton rearrangements and stimulates membrane ruffling, thus promoting bacterial entry into non-phagocytic cells. This Burkholderia mallei (strain NCTC 10247) protein is Guanine nucleotide exchange factor BopE (bopE).